The sequence spans 228 residues: MVDYLALLSSQNPYDRLDGWFKIDWLIQNNIVTKEKLIEMKDKFLDLLSYNDDTVKLHAWRMVPQLINKGIITVKDVKKYDFLSLLYDSEAWLLVKDLVNSGVIDIESVKKEKEKYIALLKGNELDRIASWSLILDIVNLGIIDKNDVENNKKYLLELFNFPAYDIRFNLLFLVAELISKGVLSPKELEPYEKKIEEIVKDKDFNQFVKIYEKDPRELESIGIHVFNS.

This is an uncharacterized protein from Acidianus ambivalens (Desulfurolobus ambivalens).